The following is a 231-amino-acid chain: 2-phospho-L-lactate guanylyltransferase (231 aa).

Belongs to the CofC family. Homodimer.

It catalyses the reaction (2S)-2-phospholactate + GTP + H(+) = (2S)-lactyl-2-diphospho-5'-guanosine + diphosphate. The protein operates within cofactor biosynthesis; coenzyme F420 biosynthesis. Functionally, guanylyltransferase that catalyzes the activation of (2S)-2-phospholactate (2-PL) as (2S)-lactyl-2-diphospho-5'-guanosine, via the condensation of 2-PL with GTP. It is involved in the biosynthesis of coenzyme F420, a hydride carrier cofactor. This Haloterrigena turkmenica (strain ATCC 51198 / DSM 5511 / JCM 9101 / NCIMB 13204 / VKM B-1734 / 4k) (Halococcus turkmenicus) protein is 2-phospho-L-lactate guanylyltransferase.